The sequence spans 865 residues: Chitin synthase 3 (865 aa).

Positions 1–59 (MASQYPGHQLDDIPSTNVYRPPPRHEDDEAEHALLHQNSAYQSQYDDPHSRPLTPGQES) are disordered. The segment covering 23–34 (PRHEDDEAEHAL) has biased composition (basic and acidic residues). Polar residues predominate over residues 36 to 45 (HQNSAYQSQY). Residues asparagine 64, asparagine 95, and asparagine 538 are each glycosylated (N-linked (GlcNAc...) asparagine). Transmembrane regions (helical) follow at residues 565–585 (FFLH…WFSL), 620–640 (IINT…FILA), and 650–670 (VAYI…IVLS). N-linked (GlcNAc...) asparagine glycosylation is present at asparagine 682. A run of 3 helical transmembrane segments spans residues 707 to 727 (IVII…FLYM), 735 to 755 (SFAQ…IYAF), and 837 to 857 (LVAT…SDSL).

It belongs to the chitin synthase family. Class III subfamily.

Its subcellular location is the cell membrane. The enzyme catalyses [(1-&gt;4)-N-acetyl-beta-D-glucosaminyl](n) + UDP-N-acetyl-alpha-D-glucosamine = [(1-&gt;4)-N-acetyl-beta-D-glucosaminyl](n+1) + UDP + H(+). In terms of biological role, polymerizes chitin, a structural polymer of the cell wall and septum, by transferring the sugar moiety of UDP-GlcNAc to the non-reducing end of the growing chitin polymer. Is not only stable at different pH, but is also able to tolerate a broad temperature range. With CHS2, plays an important role in virulence. The chain is Chitin synthase 3 from Exophiala dermatitidis (strain ATCC 34100 / CBS 525.76 / NIH/UT8656) (Black yeast).